Consider the following 467-residue polypeptide: Venom serine carboxypeptidase (467 aa).

Residues 1 to 18 (MKKLVLLQFLFFISFARG) form the signal peptide. 2 N-linked (GlcNAc...) asparagine glycosylation sites follow: Asn130 and Asn169. Ser202 is a catalytic residue. 3 N-linked (GlcNAc...) asparagine glycosylation sites follow: Asn304, Asn322, and Asn344. Active-site residues include Asp387 and His444.

The protein belongs to the peptidase S10 family. Expressed by the venom duct.

It is found in the secreted. It carries out the reaction Release of a C-terminal amino acid with broad specificity.. In Apis mellifera (Honeybee), this protein is Venom serine carboxypeptidase.